Here is a 91-residue protein sequence, read N- to C-terminus: Small ribosomal subunit protein bS18 (91 aa).

Belongs to the bacterial ribosomal protein bS18 family. As to quaternary structure, part of the 30S ribosomal subunit. Forms a tight heterodimer with protein bS6.

Binds as a heterodimer with protein bS6 to the central domain of the 16S rRNA, where it helps stabilize the platform of the 30S subunit. This Burkholderia ambifaria (strain MC40-6) protein is Small ribosomal subunit protein bS18.